The following is a 363-amino-acid chain: Protein-glutamate methylesterase/protein-glutamine glutaminase of group 3 operon (363 aa).

Positions 7–124 (RVLIVDDSAS…RQALLECSTR (118 aa)) constitute a Response regulatory domain. Aspartate 58 is modified (4-aspartylphosphate). In terms of domain architecture, CheB-type methylesterase spans 166–357 (PTTERIVCIG…REIMLWYQAG (192 aa)). Catalysis depends on residues serine 177, histidine 203, and aspartate 299.

Belongs to the CheB family. Phosphorylated by CheA. Phosphorylation of the N-terminal regulatory domain activates the methylesterase activity.

It localises to the cytoplasm. It carries out the reaction [protein]-L-glutamate 5-O-methyl ester + H2O = L-glutamyl-[protein] + methanol + H(+). The enzyme catalyses L-glutaminyl-[protein] + H2O = L-glutamyl-[protein] + NH4(+). Functionally, involved in chemotaxis. Part of a chemotaxis signal transduction system that modulates chemotaxis in response to various stimuli. Catalyzes the demethylation of specific methylglutamate residues introduced into the chemoreceptors (methyl-accepting chemotaxis proteins or MCP) by CheR. Also mediates the irreversible deamidation of specific glutamine residues to glutamic acid. This is Protein-glutamate methylesterase/protein-glutamine glutaminase of group 3 operon from Bradyrhizobium diazoefficiens (strain JCM 10833 / BCRC 13528 / IAM 13628 / NBRC 14792 / USDA 110).